The following is a 427-amino-acid chain: Riboflavin transporter rft-1 (427 aa).

Residues 1 to 2 lie on the Cytoplasmic side of the membrane; it reads MK. The chain crosses the membrane as a helical span at residues 3-23; that stretch reads TFLFTFCLVAIFGSSSWIGTN. At 24-42 the chain is on the extracellular side; it reads SVWMELSLLTAKLPEGWNL. Residues 43-63 form a helical membrane-spanning segment; that stretch reads PSYLSAIVQIACLGPLIYSII. Residues 64–73 lie on the Cytoplasmic side of the membrane; sequence HKGIKMTIPT. A helical membrane pass occupies residues 74-94; sequence VPLIFIFMVLACICQLGLCFF. Topologically, residues 95–111 are extracellular; that stretch reads WDDTGYIFGAIRSWPLY. The chain crosses the membrane as a helical span at residues 112-132; that stretch reads LLLFGLAIVDAISSVLFLPFM. The Cytoplasmic segment spans residues 133-139; that stretch reads AQFHPSF. A helical transmembrane segment spans residues 140-160; it reads LNAYFVGMGLSALIPSLLSLI. Over 161 to 184 the chain is Extracellular; sequence QGTSNYWCDDNKTPHYYPPRFSVS. The helical transmembrane segment at 185-205 threads the bilayer; that stretch reads MFFLINFFFTCAAVAAFLVLY. The Cytoplasmic portion of the chain corresponds to 206–261; the sequence is KIGAHKNSSQVEPEPKHSIQIIQGDSTTDVNEVNTESSFQETSSIPDSSSATGARL. The chain crosses the membrane as a helical span at residues 262–282; it reads AFLLLTTALVNAQMNGIVTSV. Residues 283–297 are Extracellular-facing; the sequence is QSYATLVYSQNTYHY. The chain crosses the membrane as a helical span at residues 298–318; that stretch reads AVTLSNVISPLASYLQFFVKI. The Cytoplasmic portion of the chain corresponds to 319-322; that stretch reads RSLP. A helical transmembrane segment spans residues 323–343; sequence ILAFLTLCSSLTTAVIIYLAA. Residues 344–353 lie on the Extracellular side of the membrane; sequence LSPNWIFNSE. Residues 354 to 374 traverse the membrane as a helical segment; it reads TAGTIISIASSLIAAGLHSYL. At 375–391 the chain is on the cytoplasmic side; it reads RVMFAALLREGNQKESR. The chain crosses the membrane as a helical span at residues 392 to 412; the sequence is LFWCGAFIQIGSFTGSAIMFP. Topologically, residues 413–427 are extracellular; the sequence is LVNVWKLFHSAPSCR.

This sequence belongs to the riboflavin transporter family. As to expression, expressed in intestine.

It is found in the cell membrane. It carries out the reaction riboflavin(in) = riboflavin(out). Its activity is regulated as follows. Activity is strongly inhibited by riboflavin analogs, such as lumiflavin and lumichrome. Riboflavin transporter. Riboflavin transport is Na(+)-independent but pH-sensitive. The sequence is that of Riboflavin transporter rft-1 from Caenorhabditis elegans.